A 454-amino-acid polypeptide reads, in one-letter code: Protein pid-2 (454 aa).

Residues 31–61 (VQNNQKEHPPVQEIKTVSSKSKEHRVSSSRK) form a disordered region. The segment covering 50-61 (KSKEHRVSSSRK) has biased composition (basic and acidic residues).

May interact with pid-4, pid-5, app-1 and prmt-5. Expressed throughout the mitotic and meiotic regions of the germline and in oocytes.

It is found in the cytoplasm. Its subcellular location is the perinuclear region. The protein localises to the cytoplasmic granule. Its function is as follows. Involved in gene silencing mediated by a class of 21 nucleotide PIWI-interacting RNAs (piRNAs) that possess a uracil residue at the 5'-end (also called 21U-RNAs) and that guide the Piwi protein prg-1 to its DNA targets for silencing. Not required for the biogenesis of 21U-RNAs. May also be involved in gene silencing mediated by 22G-siRNAs (a class of 22 nucleotide endogenous small interfering RNAs (siRNAs) that possess a triphosphorylated guanine residue at the 5'-end) and 26G-siRNAs (a class of 26 nucleotide siRNAs that possess a guanine residue at the 5'-end). Required for the biogenesis of secondary and tertiary 22G-siRNAs from many loci. Specifically, promotes the production of 22G-siRNAs from the 5' end of target mRNAs. May play a role in the production of 26G-siRNAs. Plays a role in small RNA-directed transgenerational epigenetic inheritance (also called RNAe) over several generations and germline immortality. Together with the argonaut protein hrde-1, promotes the silencing of the DNA transposable element Tc1. Required for the formation of liquid-like condensates in the cytoplasm called Z granules, playing a role in maintaining their assembly, viscosity and morphology in adult germ cells, and localization in early embryos. In Caenorhabditis elegans, this protein is Protein pid-2.